Consider the following 352-residue polypeptide: Decapping nuclease din1 (352 aa).

Residues arginine 33 and 93–95 each bind substrate; that span reads WRG. Position 150 (glutamate 150) interacts with a divalent metal cation. 2 residues coordinate substrate: cysteine 182 and glutamate 199. An a divalent metal cation-binding site is contributed by aspartate 201. Serine 218 is subject to Phosphoserine. Residues glutamate 239 and leucine 240 each contribute to the a divalent metal cation site. 2 residues coordinate substrate: lysine 241 and glutamine 263.

Belongs to the DXO/Dom3Z family. As to quaternary structure, interacts with dhp1/Rat1; the interaction is direct, stabilizes dhp1 protein structure and stimulates its exoribonuclease activity. The interaction also stimulates din1 pyrophosphohydrolase activity, probably by recruiting it to mRNA substrates. It depends on a divalent metal cation as a cofactor.

It is found in the nucleus. It catalyses the reaction a 5'-end NAD(+)-phospho-ribonucleoside in mRNA + H2O = a 5'-end phospho-ribonucleoside in mRNA + NAD(+) + H(+). It carries out the reaction a 5'-end (N(7)-methyl 5'-triphosphoguanosine)-ribonucleoside-ribonucleotide in mRNA + H2O = a (N(7)-methyl 5'-triphosphoguanosine)-nucleoside + a 5'-end phospho-ribonucleoside in mRNA + H(+). The catalysed reaction is a 5'-end triphospho-ribonucleoside in mRNA + H2O = a 5'-end phospho-ribonucleoside in mRNA + diphosphate + H(+). Decapping enzyme for NAD-capped RNAs: specifically hydrolyzes the nicotinamide adenine dinucleotide (NAD) cap from a subset of RNAs by removing the entire NAD moiety from the 5'-end of an NAD-capped RNA. The NAD-cap is present at the 5'-end of some RNAs and snoRNAs. In contrast to the canonical 5'-end N7 methylguanosine (m7G) cap, the NAD cap promotes mRNA decay. Also acts as a non-canonical decapping enzyme that removes the entire cap structure of m7G capped or incompletely capped RNAs and mediates their subsequent degradation. Specifically degrades pre-mRNAs with a defective m7G cap and is part of a pre-mRNA capping quality control. Has decapping activity toward incomplete 5'-end m7G cap mRNAs such as unmethylated 5'-end-capped RNA (cap0), while it has no activity toward 2'-O-ribose methylated m7G cap (cap1). Also possesses RNA 5'-pyrophosphohydrolase activity by hydrolyzing the 5'-end triphosphate to release pyrophosphates. Stimulates exoribonuclease activity of dhp1, allowing it to degrade RNAs with stable secondary structure more effectively. The polypeptide is Decapping nuclease din1 (Schizosaccharomyces pombe (strain 972 / ATCC 24843) (Fission yeast)).